The chain runs to 117 residues: Non-specific lipid-transfer protein B (117 aa).

Residues 1–25 (MAGLVKLSCLVLACMIVAGPIATNA) form the signal peptide. 4 cysteine pairs are disulfide-bonded: Cys29–Cys76, Cys39–Cys53, Cys54–Cys99, and Cys74–Cys113.

It belongs to the plant LTP family.

In terms of biological role, plant non-specific lipid-transfer proteins transfer phospholipids as well as galactolipids across membranes. May play a role in wax or cutin deposition in the cell walls of expanding epidermal cells and certain secretory tissues. This is Non-specific lipid-transfer protein B (WAX9B) from Brassica oleracea var. italica (Broccoli).